The following is a 319-amino-acid chain: uncharacterized protein (319 aa).

A signal peptide spans 1-27; it reads MYKKFVPFAVFLFLFFVSFEMMENPHA. A NodB homology domain is found at 130–306; sequence PMVAFLINVA…QIKDKGYALG (177 aa).

Belongs to the polysaccharide deacetylase family.

This is an uncharacterized protein from Bacillus subtilis (strain 168).